The primary structure comprises 93 residues: Small ribosomal subunit protein uS19 (93 aa).

This sequence belongs to the universal ribosomal protein uS19 family.

Its function is as follows. Protein S19 forms a complex with S13 that binds strongly to the 16S ribosomal RNA. This chain is Small ribosomal subunit protein uS19, found in Blochmanniella floridana.